The chain runs to 81 residues: ATP synthase subunit c (81 aa).

A run of 2 helical transmembrane segments spans residues 7–27 (AASV…PGIG) and 57–77 (LAFM…LLFA).

It belongs to the ATPase C chain family. As to quaternary structure, F-type ATPases have 2 components, F(1) - the catalytic core - and F(0) - the membrane proton channel. F(1) has five subunits: alpha(3), beta(3), gamma(1), delta(1), epsilon(1). F(0) has four main subunits: a(1), b(1), b'(1) and c(10-14). The alpha and beta chains form an alternating ring which encloses part of the gamma chain. F(1) is attached to F(0) by a central stalk formed by the gamma and epsilon chains, while a peripheral stalk is formed by the delta, b and b' chains.

Its subcellular location is the cellular thylakoid membrane. In terms of biological role, f(1)F(0) ATP synthase produces ATP from ADP in the presence of a proton or sodium gradient. F-type ATPases consist of two structural domains, F(1) containing the extramembraneous catalytic core and F(0) containing the membrane proton channel, linked together by a central stalk and a peripheral stalk. During catalysis, ATP synthesis in the catalytic domain of F(1) is coupled via a rotary mechanism of the central stalk subunits to proton translocation. Functionally, key component of the F(0) channel; it plays a direct role in translocation across the membrane. A homomeric c-ring of between 10-14 subunits forms the central stalk rotor element with the F(1) delta and epsilon subunits. The polypeptide is ATP synthase subunit c (Synechococcus elongatus (strain ATCC 33912 / PCC 7942 / FACHB-805) (Anacystis nidulans R2)).